The following is a 217-amino-acid chain: Ras-related protein RGP2 (217 aa).

GTP is bound by residues 19–26, 67–71, and 125–128; these read GDSGVGKS, DTAGQ, and NKSD. Residues Cys-214 and Cys-215 are each lipidated (S-geranylgeranyl cysteine).

Belongs to the small GTPase superfamily. Rab family.

It is found in the cell membrane. This chain is Ras-related protein RGP2 (RGP2), found in Oryza sativa subsp. japonica (Rice).